Reading from the N-terminus, the 418-residue chain is 3-isopropylmalate dehydratase large subunit 1 (418 aa).

Positions 298, 358, and 361 each coordinate [4Fe-4S] cluster.

It belongs to the aconitase/IPM isomerase family. LeuC type 2 subfamily. Heterodimer of LeuC and LeuD. It depends on [4Fe-4S] cluster as a cofactor.

It catalyses the reaction (2R,3S)-3-isopropylmalate = (2S)-2-isopropylmalate. Its pathway is amino-acid biosynthesis; L-leucine biosynthesis; L-leucine from 3-methyl-2-oxobutanoate: step 2/4. In terms of biological role, catalyzes the isomerization between 2-isopropylmalate and 3-isopropylmalate, via the formation of 2-isopropylmaleate. This is 3-isopropylmalate dehydratase large subunit 1 from Archaeoglobus fulgidus (strain ATCC 49558 / DSM 4304 / JCM 9628 / NBRC 100126 / VC-16).